Reading from the N-terminus, the 319-residue chain is Ribonuclease Z (319 aa).

Zn(2+) contacts are provided by His-62, His-64, Asp-66, His-67, His-139, Asp-209, and His-268. The Proton acceptor role is filled by Asp-66.

This sequence belongs to the RNase Z family. Homodimer. Zn(2+) is required as a cofactor.

It carries out the reaction Endonucleolytic cleavage of RNA, removing extra 3' nucleotides from tRNA precursor, generating 3' termini of tRNAs. A 3'-hydroxy group is left at the tRNA terminus and a 5'-phosphoryl group is left at the trailer molecule.. Functionally, zinc phosphodiesterase, which displays some tRNA 3'-processing endonuclease activity. Probably involved in tRNA maturation, by removing a 3'-trailer from precursor tRNA. The protein is Ribonuclease Z of Pseudomonas putida (strain ATCC 47054 / DSM 6125 / CFBP 8728 / NCIMB 11950 / KT2440).